The chain runs to 392 residues: Protein FAM53C (392 aa).

Residue Met1 is modified to N-acetylmethionine. Positions 78–119 (LRPPSRGNSPKEQPFSQVLRPEPPDPEKLPVPPAPPSKRHCR) are disordered. The span at 83-93 (RGNSPKEQPFS) shows a compositional bias: polar residues. A phosphoserine mark is found at Ser122, Ser162, Ser232, Ser234, Ser255, and Ser273. Disordered stretches follow at residues 141–167 (LWTP…PKRV) and 204–294 (RPCA…EDPR). Residues 241–256 (ASRFLPSARSSPASSP) are compositionally biased toward low complexity. Positions 278–294 (LDARKTGVKRRHEEDPR) are enriched in basic and acidic residues. Residue Ser299 is modified to Phosphoserine. The tract at residues 341–364 (ASCSPTGGSSQVLSESEEEEEGAV) is disordered.

The protein belongs to the FAM53 family.

In Homo sapiens (Human), this protein is Protein FAM53C.